A 115-amino-acid polypeptide reads, in one-letter code: Ribonuclease P protein component (115 aa).

The protein belongs to the RnpA family. In terms of assembly, consists of a catalytic RNA component (M1 or rnpB) and a protein subunit.

It carries out the reaction Endonucleolytic cleavage of RNA, removing 5'-extranucleotides from tRNA precursor.. In terms of biological role, RNaseP catalyzes the removal of the 5'-leader sequence from pre-tRNA to produce the mature 5'-terminus. It can also cleave other RNA substrates such as 4.5S RNA. The protein component plays an auxiliary but essential role in vivo by binding to the 5'-leader sequence and broadening the substrate specificity of the ribozyme. The chain is Ribonuclease P protein component from Bacillus cereus (strain AH187).